The primary structure comprises 295 residues: Protoheme IX farnesyltransferase (295 aa).

Topologically, residues 1–9 (MSVKHFIQI) are cytoplasmic. Residues 10 to 28 (TKPGIIFGNVLSVAGGFFL) form a helical membrane-spanning segment. The Periplasmic portion of the chain corresponds to 29–37 (ASKGHVDFA). A helical transmembrane segment spans residues 38-56 (LFLAVVIGTSLVVASGCVF). At 57-78 (NNCIDRDIDHKMERTKNRVMVQ) the chain is on the cytoplasmic side. A helical membrane pass occupies residues 79-97 (GGMSLPLALIYATLLGVAG). At 98-107 (FSLLYVQANP) the chain is on the periplasmic side. A helical transmembrane segment spans residues 108–126 (LSAFCALIGFIVYVGFYSL). Over 127–197 (WLKRKSVHGT…YSAANIPVLP (71 aa)) the chain is Cytoplasmic. Residues 198–216 (VARGILAAKKQIVLYVLAF) form a helical membrane-spanning segment. Residues 217 to 228 (VLATLMLTLGGY) are Periplasmic-facing. A helical membrane pass occupies residues 229 to 247 (AGLGYLAVAAAMGLYWLYM). Residues 248–268 (AWGGYKAEDDSKWARKVFGFS) are Cytoplasmic-facing. Residues 269 to 287 (ILTVTALSVMMGVDSQTAA) form a helical membrane-spanning segment. Over 288–295 (DVLMTYAR) the chain is Periplasmic.

It belongs to the UbiA prenyltransferase family. Mg(2+) serves as cofactor. Requires Ca(2+) as cofactor.

The protein resides in the cell inner membrane. It carries out the reaction heme b + (2E,6E)-farnesyl diphosphate + H2O = Fe(II)-heme o + diphosphate. Converts protoheme IX and farnesyl diphosphate to heme O. This chain is Protoheme IX farnesyltransferase (cyoE), found in Pseudomonas putida (Arthrobacter siderocapsulatus).